A 542-amino-acid chain; its full sequence is CTP synthase (542 aa).

Residues 1–265 (MTRYVFITGG…DREILAHFQM (265 aa)) form an amidoligase domain region. S13 is a CTP binding site. UTP is bound at residue S13. Residues 14 to 19 (SLGKGL) and D71 each bind ATP. D71 and E139 together coordinate Mg(2+). CTP-binding positions include 146 to 148 (DIE), 186 to 191 (KTKPTQ), and K222. UTP-binding positions include 186–191 (KTKPTQ) and K222. Residue 238 to 240 (RDV) coordinates ATP. The region spanning 291-541 (TIAIVGKYTG…IAAAIEQSRL (251 aa)) is the Glutamine amidotransferase type-1 domain. G353 serves as a coordination point for L-glutamine. The active-site Nucleophile; for glutamine hydrolysis is the C380. L-glutamine-binding positions include 381–384 (FGMQ), E404, and R469. Catalysis depends on residues H514 and E516.

It belongs to the CTP synthase family. In terms of assembly, homotetramer.

The enzyme catalyses UTP + L-glutamine + ATP + H2O = CTP + L-glutamate + ADP + phosphate + 2 H(+). It carries out the reaction L-glutamine + H2O = L-glutamate + NH4(+). The catalysed reaction is UTP + NH4(+) + ATP = CTP + ADP + phosphate + 2 H(+). Its pathway is pyrimidine metabolism; CTP biosynthesis via de novo pathway; CTP from UDP: step 2/2. Allosterically activated by GTP, when glutamine is the substrate; GTP has no effect on the reaction when ammonia is the substrate. The allosteric effector GTP functions by stabilizing the protein conformation that binds the tetrahedral intermediate(s) formed during glutamine hydrolysis. Inhibited by the product CTP, via allosteric rather than competitive inhibition. Functionally, catalyzes the ATP-dependent amination of UTP to CTP with either L-glutamine or ammonia as the source of nitrogen. Regulates intracellular CTP levels through interactions with the four ribonucleotide triphosphates. The protein is CTP synthase of Methylorubrum populi (strain ATCC BAA-705 / NCIMB 13946 / BJ001) (Methylobacterium populi).